A 188-amino-acid chain; its full sequence is Adenine phosphoribosyltransferase (188 aa).

It belongs to the purine/pyrimidine phosphoribosyltransferase family. In terms of assembly, homodimer.

It is found in the cytoplasm. It catalyses the reaction AMP + diphosphate = 5-phospho-alpha-D-ribose 1-diphosphate + adenine. Its pathway is purine metabolism; AMP biosynthesis via salvage pathway; AMP from adenine: step 1/1. In terms of biological role, catalyzes a salvage reaction resulting in the formation of AMP, that is energically less costly than de novo synthesis. The chain is Adenine phosphoribosyltransferase from Burkholderia multivorans (strain ATCC 17616 / 249).